A 106-amino-acid chain; its full sequence is L-rhamnose mutarotase (106 aa).

Y20 is a substrate binding site. The Proton donor role is filled by H24. Residues Y43 and W78–W79 each bind substrate.

The protein belongs to the rhamnose mutarotase family. As to quaternary structure, homodimer.

It localises to the cytoplasm. It carries out the reaction alpha-L-rhamnose = beta-L-rhamnose. The protein operates within carbohydrate metabolism; L-rhamnose metabolism. Functionally, involved in the anomeric conversion of L-rhamnose. This chain is L-rhamnose mutarotase, found in Leptothrix cholodnii (strain ATCC 51168 / LMG 8142 / SP-6) (Leptothrix discophora (strain SP-6)).